The chain runs to 573 residues: Transcription factor E3 (573 aa).

A Phosphoserine; by MTOR modification is found at S47. The interval T91 to S151 is disordered. Low complexity predominate over residues S107–Q126. Positions E127–Q136 are enriched in basic and acidic residues. A compositionally biased stretch (low complexity) spans A137–S151. The residue at position 186 (R186) is an Asymmetric dimethylarginine. Residues L209 to L248 form a disordered region. Residues E258–L269 are strong transcription activation domain. Residue S319 is modified to Phosphoserine; by MTOR. A Glycyl lysine isopeptide (Lys-Gly) (interchain with G-Cter in SUMO2) cross-link involves residue K337. The bHLH domain occupies Q344–L397. The short motif at R354–R357 is the Nuclear localization signal element. The tract at residues L407–L428 is leucine-zipper. A disordered region spans residues V531–S573. Residues G537 to S573 show a composition bias toward low complexity. A phosphoserine mark is found at S540, S546, S552, S554, S558, and S566.

The protein belongs to the MiT/TFE family. In terms of assembly, homodimer and heterodimer; with TFEB or MITF. Interacts with RRAGC/RagC GDP-bound and RRAGD/RagD GDP-bound; promoting its recruitment to lysosomal membrane in the presence of nutrients. Phosphorylation ar Ser-47 and Ser-319 by MTOR via non-canonical mTORC1 pathway regulates its stability and subcellular location, respectively. When nutrients are present, phosphorylation by MTOR at Ser-47 promotes ubiquitination by the SCF(BTRC) complex, followed by degradation. When nutrients are present, phosphorylation by MTOR at Ser-319 also promotes association with 14-3-3/YWHA adapters and retention in the cytosol. Phosphorylation at Ser-47 plays a more critical role than phosphorylation at Ser-319 for TFE3 inactivation. Inhibition of mTORC1, starvation and lysosomal disruption, promotes dephosphorylation and transcription factor activity. Post-translationally, ubiquitinated by the SCF(BTRC) and SCF(FBXW11) complexes following phosphorylation at Ser-47 by MTOR, leading to its degradation by the proteasome. In terms of processing, sumoylated; does not affect dimerization with MITF.

Its subcellular location is the cytoplasm. The protein resides in the cytosol. It is found in the nucleus. The protein localises to the lysosome membrane. Its function is as follows. Transcription factor that acts as a master regulator of lysosomal biogenesis and immune response. Specifically recognizes and binds E-box sequences (5'-CANNTG-3'); efficient DNA-binding requires dimerization with itself or with another MiT/TFE family member such as TFEB or MITF. Involved in the cellular response to amino acid availability by acting downstream of MTOR: in the presence of nutrients, TFE3 phosphorylation by MTOR promotes its inactivation. Upon starvation or lysosomal stress, inhibition of MTOR induces TFE3 dephosphorylation, resulting in transcription factor activity. Specifically recognizes and binds the CLEAR-box sequence (5'-GTCACGTGAC-3') present in the regulatory region of many lysosomal genes, leading to activate their expression, thereby playing a central role in expression of lysosomal genes. Maintains the pluripotent state of embryonic stem cells by promoting the expression of genes such as ESRRB; mTOR-dependent TFE3 cytosolic retention and inactivation promotes exit from pluripotency. Required to maintain the naive pluripotent state of hematopoietic stem cell; mTOR-dependent cytoplasmic retention of TFE3 promotes the exit of hematopoietic stem cell from pluripotency. TFE3 activity is also involved in the inhibition of neuronal progenitor differentiation. Acts as a positive regulator of browning of adipose tissue by promoting expression of target genes; mTOR-dependent phosphorylation promotes cytoplasmic retention of TFE3 and inhibits browning of adipose tissue. In association with TFEB, activates the expression of CD40L in T-cells, thereby playing a role in T-cell-dependent antibody responses in activated CD4(+) T-cells and thymus-dependent humoral immunity. Specifically recognizes the MUE3 box, a subset of E-boxes, present in the immunoglobulin enhancer. It also binds very well to a USF/MLTF site. May regulate lysosomal positioning in response to nutrient deprivation by promoting the expression of PIP4P1. The chain is Transcription factor E3 from Bos taurus (Bovine).